A 412-amino-acid polypeptide reads, in one-letter code: Tyrosine--tRNA ligase (412 aa).

Tyrosine 31 lines the L-tyrosine pocket. A 'HIGH' region motif is present at residues 36-45; the sequence is PTAPSLHIGH. Residues tyrosine 162 and glutamine 166 each coordinate L-tyrosine. The short motif at 222 to 226 is the 'KMSKS' region element; the sequence is KIGKT. Residue lysine 225 participates in ATP binding. In terms of domain architecture, S4 RNA-binding spans 345–411; it reads KRWLDIVVEL…GKRKKQVIDL (67 aa).

The protein belongs to the class-I aminoacyl-tRNA synthetase family. TyrS type 1 subfamily. Homodimer.

The protein localises to the cytoplasm. It catalyses the reaction tRNA(Tyr) + L-tyrosine + ATP = L-tyrosyl-tRNA(Tyr) + AMP + diphosphate + H(+). Its function is as follows. Catalyzes the attachment of tyrosine to tRNA(Tyr) in a two-step reaction: tyrosine is first activated by ATP to form Tyr-AMP and then transferred to the acceptor end of tRNA(Tyr). This chain is Tyrosine--tRNA ligase, found in Chlamydia trachomatis serovar L2 (strain ATCC VR-902B / DSM 19102 / 434/Bu).